Here is a 542-residue protein sequence, read N- to C-terminus: 2,3-bisphosphoglycerate-independent phosphoglycerate mutase (542 aa).

Residues Asp-24 and Ser-74 each coordinate Mn(2+). Ser-74 acts as the Phosphoserine intermediate in catalysis. Substrate-binding positions include His-135, 165–166, Arg-197, Arg-203, 268–271, and Lys-341; these read RD and RPDR. Residues Asp-408, His-412, Asp-449, His-450, and His-467 each coordinate Mn(2+).

The protein belongs to the BPG-independent phosphoglycerate mutase family. In terms of assembly, monomer. Mn(2+) serves as cofactor.

It carries out the reaction (2R)-2-phosphoglycerate = (2R)-3-phosphoglycerate. The protein operates within carbohydrate degradation; glycolysis; pyruvate from D-glyceraldehyde 3-phosphate: step 3/5. Catalyzes the interconversion of 2-phosphoglycerate and 3-phosphoglycerate. This Prochlorococcus marinus (strain NATL1A) protein is 2,3-bisphosphoglycerate-independent phosphoglycerate mutase.